Consider the following 227-residue polypeptide: Cytochrome c oxidase subunit 2 (227 aa).

At 1–14 (MACPVQLGFQDAAS) the chain is on the mitochondrial intermembrane side. Residues 15-45 (PIMEELTYFHDHTLMIVFLISSLVLYIISLM) form a helical membrane-spanning segment. Over 46–59 (LTTELTHTSTMDAQ) the chain is Mitochondrial matrix. Residues 60–87 (EVETVWTILPAVILILIALPSLRILYMM) traverse the membrane as a helical segment. Residues 88–227 (DEITTPSLTL…HFEEWLLAML (140 aa)) lie on the Mitochondrial intermembrane side of the membrane. Residues His161, Cys196, Glu198, Cys200, His204, and Met207 each coordinate Cu cation. Glu198 contributes to the Mg(2+) binding site.

Belongs to the cytochrome c oxidase subunit 2 family. Component of the cytochrome c oxidase (complex IV, CIV), a multisubunit enzyme composed of 14 subunits. The complex is composed of a catalytic core of 3 subunits MT-CO1, MT-CO2 and MT-CO3, encoded in the mitochondrial DNA, and 11 supernumerary subunits COX4I, COX5A, COX5B, COX6A, COX6B, COX6C, COX7A, COX7B, COX7C, COX8 and NDUFA4, which are encoded in the nuclear genome. The complex exists as a monomer or a dimer and forms supercomplexes (SCs) in the inner mitochondrial membrane with NADH-ubiquinone oxidoreductase (complex I, CI) and ubiquinol-cytochrome c oxidoreductase (cytochrome b-c1 complex, complex III, CIII), resulting in different assemblies (supercomplex SCI(1)III(2)IV(1) and megacomplex MCI(2)III(2)IV(2)). Found in a complex with TMEM177, COA6, COX18, COX20, SCO1 and SCO2. Interacts with TMEM177 in a COX20-dependent manner. Interacts with COX20. Interacts with COX16. It depends on Cu cation as a cofactor.

It localises to the mitochondrion inner membrane. The enzyme catalyses 4 Fe(II)-[cytochrome c] + O2 + 8 H(+)(in) = 4 Fe(III)-[cytochrome c] + 2 H2O + 4 H(+)(out). Functionally, component of the cytochrome c oxidase, the last enzyme in the mitochondrial electron transport chain which drives oxidative phosphorylation. The respiratory chain contains 3 multisubunit complexes succinate dehydrogenase (complex II, CII), ubiquinol-cytochrome c oxidoreductase (cytochrome b-c1 complex, complex III, CIII) and cytochrome c oxidase (complex IV, CIV), that cooperate to transfer electrons derived from NADH and succinate to molecular oxygen, creating an electrochemical gradient over the inner membrane that drives transmembrane transport and the ATP synthase. Cytochrome c oxidase is the component of the respiratory chain that catalyzes the reduction of oxygen to water. Electrons originating from reduced cytochrome c in the intermembrane space (IMS) are transferred via the dinuclear copper A center (CU(A)) of subunit 2 and heme A of subunit 1 to the active site in subunit 1, a binuclear center (BNC) formed by heme A3 and copper B (CU(B)). The BNC reduces molecular oxygen to 2 water molecules using 4 electrons from cytochrome c in the IMS and 4 protons from the mitochondrial matrix. This chain is Cytochrome c oxidase subunit 2 (MT-CO2), found in Cheirogaleus medius (Fat-tailed dwarf lemur).